The primary structure comprises 197 residues: Protein lin-7 homolog C (197 aa).

Ala-2 carries the post-translational modification N-acetylalanine. Positions 2–13 match the Kinase interacting site motif; sequence AALGEPVRLERD. The region spanning 10–65 is the L27 domain; that stretch reads LERDICRAIELLEKLQRSGEVPPQKLQALQRVLQSEFCNAVREVYEHVYETVDISS. A PDZ domain is found at 93 to 175; that stretch reads VVELPKTEEG…KVKLVVRYTP (83 aa).

Belongs to the lin-7 family. Forms a complex with CASK and APBA1 or CASKIN1. Component of the brain-specific heterotrimeric complex (LIN-10-LIN-2-LIN-7 complex) composed of at least APBA1, CASK, and LIN7, which associates with the motor protein KIF17 to transport vesicles along microtubules. Can also interact with other modular proteins containing protein-protein interaction domains like PALS1, PALS2, MPP7, DLG1, DLG2 and DLG3 through its L27 domain. Interacts with DLG4 and GRIN2B as well as CDH1 and CTNNB1, the channels KCNJ12/Kir2.2, KCNJ4/Kir2.3 and probably KCNJ2/Kir2.1 and SLC6A12/BGT-1 via its PDZ domain. The association of LIN7A with cadherin and beta-catenin is calcium-dependent, occurs at synaptic junctions and requires the actin cytoskeleton. Interacts with EGFR, ERBB2, ERBB3 and ERBB4 with both PDZ and KID domains. Associates with KIF17 via APBA1. Interacts with HTR4. Forms a tripartite complex composed of DLG1, MPP7 and LIN7 (LIN7A or LIN7C). Interacts with MAPK12.

The protein resides in the cell membrane. It localises to the basolateral cell membrane. Its subcellular location is the cell junction. The protein localises to the postsynaptic density membrane. It is found in the tight junction. The protein resides in the synapse. It localises to the synaptosome. Functionally, plays a role in establishing and maintaining the asymmetric distribution of channels and receptors at the plasma membrane of polarized cells. Forms membrane-associated multiprotein complexes that may regulate delivery and recycling of proteins to the correct membrane domains. The tripartite complex composed of LIN7 (LIN7A, LIN7B or LIN7C), CASK and APBA1 associates with the motor protein KIF17 to transport vesicles containing N-methyl-D-aspartate (NMDA) receptor subunit NR2B along microtubules. This complex may have the potential to couple synaptic vesicle exocytosis to cell adhesion in brain. Ensures the proper localization of GRIN2B (subunit 2B of the NMDA receptor) to neuronal postsynaptic density and may function in localizing synaptic vesicles at synapses where it is recruited by beta-catenin and cadherin. Required to localize Kir2 channels, GABA transporter (SLC6A12) and EGFR/ERBB1, ERBB2, ERBB3 and ERBB4 to the basolateral membrane of epithelial cells. The chain is Protein lin-7 homolog C (LIN7C) from Bos taurus (Bovine).